A 145-amino-acid chain; its full sequence is Large ribosomal subunit protein uL11 (145 aa).

It belongs to the universal ribosomal protein uL11 family. As to quaternary structure, part of the ribosomal stalk of the 50S ribosomal subunit. Interacts with L10 and the large rRNA to form the base of the stalk. L10 forms an elongated spine to which L12 dimers bind in a sequential fashion forming a multimeric L10(L12)X complex. Post-translationally, one or more lysine residues are methylated.

In terms of biological role, forms part of the ribosomal stalk which helps the ribosome interact with GTP-bound translation factors. This chain is Large ribosomal subunit protein uL11, found in Corynebacterium glutamicum (strain ATCC 13032 / DSM 20300 / JCM 1318 / BCRC 11384 / CCUG 27702 / LMG 3730 / NBRC 12168 / NCIMB 10025 / NRRL B-2784 / 534).